The chain runs to 248 residues: Anamorsin homolog (248 aa).

The segment at 4-129 (FKGLQKSLYI…ETGSSARLSF (126 aa)) is N-terminal SAM-like domain. Positions 130 to 161 (AKKNASAVNVWKISGDDEELIDEEELLDEEDK) are linker. 4 residues coordinate [2Fe-2S] cluster: Cys172, Cys181, Cys184, and Cys186. Positions 172 to 186 (CSTTGKRKACKNCSC) are fe-S binding site A. Positions 209, 212, 220, and 223 each coordinate [4Fe-4S] cluster. Short sequence motifs (cx2C motif) lie at residues 209 to 212 (CGNC) and 220 to 223 (CSTC). The segment at 209–223 (CGNCYLGDAFRCSTC) is fe-S binding site B.

This sequence belongs to the anamorsin family. As to quaternary structure, monomer. The cofactor is [2Fe-2S] cluster. It depends on [4Fe-4S] cluster as a cofactor.

The protein localises to the cytoplasm. It is found in the mitochondrion intermembrane space. Its function is as follows. Component of the cytosolic iron-sulfur (Fe-S) protein assembly (CIA) machinery. Required for the maturation of extramitochondrial Fe-S proteins. Part of an electron transfer chain functioning in an early step of cytosolic Fe-S biogenesis, facilitating the de novo assembly of a [4Fe-4S] cluster on the cytosolic Fe-S scaffold complex. Electrons are transferred from NADPH via a FAD- and FMN-containing diflavin oxidoreductase. Together with the diflavin oxidoreductase, also required for the assembly of the diferric tyrosyl radical cofactor of ribonucleotide reductase (RNR), probably by providing electrons for reduction during radical cofactor maturation in the catalytic small subunit. The chain is Anamorsin homolog from Drosophila yakuba (Fruit fly).